The primary structure comprises 348 residues: Hereditary hemochromatosis protein (348 aa).

Positions 1–22 (MGPRARPALLLLMLLQTAVLQG) are cleaved as a signal peptide. The segment at 23–114 (RLLRSHSLHY…IMENHNHSKE (92 aa)) is alpha-1. The Extracellular portion of the chain corresponds to 23 to 306 (RLLRSHSLHY…WEPSPSGTLV (284 aa)). N-linked (GlcNAc...) asparagine glycosylation is found at N110, N130, and N234. Positions 115–205 (SHTLQVILGC…ELGRGVLDQQ (91 aa)) are alpha-2. Cystine bridges form between C124–C187 and C225–C282. The segment at 206-297 (VPPLVKVTHH…GLDQPLIVIW (92 aa)) is alpha-3. In terms of domain architecture, Ig-like C1-type spans 207–298 (PPLVKVTHHV…LDQPLIVIWE (92 aa)). Residues 298–306 (EPSPSGTLV) are connecting peptide. A helical transmembrane segment spans residues 307 to 330 (IGVISGIAVFVVILFIGILFIILR). Topologically, residues 331-348 (KRQGSRGAMGHYVLAERE) are cytoplasmic.

The protein belongs to the MHC class I family. As to quaternary structure, binds TFR through the extracellular domain in a pH-dependent manner. In terms of tissue distribution, expressed in all tissues tested except brain.

Its subcellular location is the cell membrane. Functionally, binds to transferrin receptor (TFR) and reduces its affinity for iron-loaded transferrin. In Homo sapiens (Human), this protein is Hereditary hemochromatosis protein (HFE).